The following is a 296-amino-acid chain: Protoheme IX farnesyltransferase 2 (296 aa).

Transmembrane regions (helical) follow at residues 7–27 (LLVA…GGYF), 36–56 (PMLL…GCVL), 83–103 (LKAA…LLWW), 108–128 (LTTA…SLWF), 134–154 (YGTL…YCAV), 163–183 (ASLL…IAIF), 207–227 (IHIV…CLGG), 229–249 (AGYG…AIAL), and 265–285 (FAFS…DFQV).

Belongs to the UbiA prenyltransferase family. Protoheme IX farnesyltransferase subfamily.

The protein resides in the cell inner membrane. The enzyme catalyses heme b + (2E,6E)-farnesyl diphosphate + H2O = Fe(II)-heme o + diphosphate. It participates in porphyrin-containing compound metabolism; heme O biosynthesis; heme O from protoheme: step 1/1. Functionally, converts heme B (protoheme IX) to heme O by substitution of the vinyl group on carbon 2 of heme B porphyrin ring with a hydroxyethyl farnesyl side group. The polypeptide is Protoheme IX farnesyltransferase 2 (Pseudomonas paraeruginosa (strain DSM 24068 / PA7) (Pseudomonas aeruginosa (strain PA7))).